The chain runs to 467 residues: Proton extrusion protein PxcA (467 aa).

Residues 146–161 (SQVRTTSSQPPENPSL) show a composition bias toward polar residues. Disordered regions lie at residues 146-167 (SQVRTTSSQPPENPSLTDALRT) and 186-205 (PQLIKQRTEQSKKSRGKADT). Over residues 191–203 (QRTEQSKKSRGKA) the composition is skewed to basic and acidic residues. A run of 4 helical transmembrane segments spans residues 249–269 (FILLIIIVPLLTHQLSKALIV), 352–372 (IFSVGAFIWLLLVSKPSIMVL), 391–411 (IIILFTDVFVGFHSPHGWEVI), and 427–447 (FIFLFIATFPVILDTIFKYWI).

Belongs to the CemA family.

The protein resides in the cell inner membrane. Its function is as follows. Required for H(+) efflux immediately after light irradiation to form a rapid H(+) concentration gradient across the thylakoid membranes. Together with PxcL, contributes to transient H(+) uptake following dark to light transition. The sequence is that of Proton extrusion protein PxcA from Nostoc sp. (strain PCC 7120 / SAG 25.82 / UTEX 2576).